A 127-amino-acid polypeptide reads, in one-letter code: Protein translocase subunit SecE (127 aa).

The next 3 membrane-spanning stretches (helical) occupy residues 16–36, 42–62, and 98–118; these read IAKWSFLGILIILFILSNHYY, IFQNILLTSLTILSTGLIFLT, and IIVTILLALILWGLDNILIWF.

Belongs to the SecE/SEC61-gamma family. As to quaternary structure, component of the Sec protein translocase complex. Heterotrimer consisting of SecY, SecE and SecG subunits. The heterotrimers can form oligomers, although 1 heterotrimer is thought to be able to translocate proteins. Interacts with the ribosome. Interacts with SecDF, and other proteins may be involved. Interacts with SecA.

It is found in the cell membrane. Its function is as follows. Essential subunit of the Sec protein translocation channel SecYEG. Clamps together the 2 halves of SecY. May contact the channel plug during translocation. This chain is Protein translocase subunit SecE, found in Buchnera aphidicola subsp. Baizongia pistaciae (strain Bp).